A 430-amino-acid chain; its full sequence is MTAKWEKQSGSLGVLTYEAPAEAFDKAVDQAFKKVVKTLNTPGFRKGKMPRAMFNKMYGEEALYQDALDILYQDTIEGAVVESGIEPIALDNIDVETLEKGKPVEFKITFVIEPDATLGEYKGLEYTAVETDVTDEDVDAELKTMQERGAELVVKEDGAIENGDTVVFDFAGFDGENQFDGGTAENYSLVIGSGNFIPGFEEQMVGLKSGEQKDIDVTFPEEYHEASLAGKPVVFKVTIHEIKAQELPELTDEFAKEMDEEVSSLDELKTKIRTRLENTRKQEADASMRDELVEAATKNATVDLPEVMVENEVERMVQEFTQRIQSQGIDLNMYFQLTGTTEEAMRTEMKEQAEERVKARLVLKQIVADEKIEVTEEEAQAELQSMSELYNIPADQLETMLAPQGGLDTLKGDLQFRKAIDVLVDNAKAK.

In terms of domain architecture, PPIase FKBP-type spans 163–248 (GDTVVFDFAG…IHEIKAQELP (86 aa)).

It belongs to the FKBP-type PPIase family. Tig subfamily.

Its subcellular location is the cytoplasm. The catalysed reaction is [protein]-peptidylproline (omega=180) = [protein]-peptidylproline (omega=0). In terms of biological role, involved in protein export. Acts as a chaperone by maintaining the newly synthesized protein in an open conformation. Functions as a peptidyl-prolyl cis-trans isomerase. This Exiguobacterium sibiricum (strain DSM 17290 / CCUG 55495 / CIP 109462 / JCM 13490 / 255-15) protein is Trigger factor.